The primary structure comprises 227 residues: UPF0173 metal-dependent hydrolase BCE_4747 (227 aa).

The protein belongs to the UPF0173 family.

The chain is UPF0173 metal-dependent hydrolase BCE_4747 from Bacillus cereus (strain ATCC 10987 / NRS 248).